Consider the following 160-residue polypeptide: MADDNNSNGATNPTLSILAQYTKDLSFENPGAPRSLQARDKAPTININVNVNANPLSDTDFDVVLSLNAEAKDGDKTVFHTELVYGGVFRVAGFPQEHMLPVLFIECPRMLFPFARQIIADVTRNGGFPPLMIDPIDFTQMFAQRVAEEQARAKVQAVPN.

Belongs to the SecB family. As to quaternary structure, homotetramer, a dimer of dimers. One homotetramer interacts with 1 SecA dimer.

Its subcellular location is the cytoplasm. Its function is as follows. One of the proteins required for the normal export of preproteins out of the cell cytoplasm. It is a molecular chaperone that binds to a subset of precursor proteins, maintaining them in a translocation-competent state. It also specifically binds to its receptor SecA. The sequence is that of Protein-export protein SecB from Rhizobium etli (strain ATCC 51251 / DSM 11541 / JCM 21823 / NBRC 15573 / CFN 42).